We begin with the raw amino-acid sequence, 343 residues long: UDP-3-O-acylglucosamine N-acyltransferase (343 aa).

The active-site Proton acceptor is H236.

The protein belongs to the transferase hexapeptide repeat family. LpxD subfamily. As to quaternary structure, homotrimer.

It carries out the reaction a UDP-3-O-[(3R)-3-hydroxyacyl]-alpha-D-glucosamine + a (3R)-hydroxyacyl-[ACP] = a UDP-2-N,3-O-bis[(3R)-3-hydroxyacyl]-alpha-D-glucosamine + holo-[ACP] + H(+). It functions in the pathway bacterial outer membrane biogenesis; LPS lipid A biosynthesis. Functionally, catalyzes the N-acylation of UDP-3-O-acylglucosamine using 3-hydroxyacyl-ACP as the acyl donor. Is involved in the biosynthesis of lipid A, a phosphorylated glycolipid that anchors the lipopolysaccharide to the outer membrane of the cell. This chain is UDP-3-O-acylglucosamine N-acyltransferase, found in Syntrophotalea carbinolica (strain DSM 2380 / NBRC 103641 / GraBd1) (Pelobacter carbinolicus).